We begin with the raw amino-acid sequence, 557 residues long: Carbamoyl phosphate synthase large chain, N-terminal section (557 aa).

The carboxyphosphate synthetic domain stretch occupies residues 1–402 (MPKRTDIKKI…ALLKAVRSLE (402 aa)). Positions 129, 169, 175, 176, 208, 210, 215, 241, 242, 243, 285, and 299 each coordinate ATP. The region spanning 133–328 (KETMESIGLK…IAKVAAKLAV (196 aa)) is the ATP-grasp domain. Residues Gln-285, Glu-299, and Asn-301 each coordinate Mg(2+). Positions 285, 299, and 301 each coordinate Mn(2+). Residues 403-553 (LDRYGLAFPK…PYYTVDGQEI (151 aa)) form an oligomerization domain region.

It belongs to the CarB family. As to quaternary structure, composed of two chains; the small (or glutamine) chain promotes the hydrolysis of glutamine to ammonia, which is used by the large (or ammonia) chain to synthesize carbamoyl phosphate. Tetramer of heterodimers (alpha,beta)4. Mg(2+) is required as a cofactor. The cofactor is Mn(2+).

The enzyme catalyses hydrogencarbonate + L-glutamine + 2 ATP + H2O = carbamoyl phosphate + L-glutamate + 2 ADP + phosphate + 2 H(+). The catalysed reaction is hydrogencarbonate + NH4(+) + 2 ATP = carbamoyl phosphate + 2 ADP + phosphate + 2 H(+). It functions in the pathway amino-acid biosynthesis; L-arginine biosynthesis; carbamoyl phosphate from bicarbonate: step 1/1. Its pathway is pyrimidine metabolism; UMP biosynthesis via de novo pathway; (S)-dihydroorotate from bicarbonate: step 1/3. Functionally, large subunit of the glutamine-dependent carbamoyl phosphate synthetase (CPSase). CPSase catalyzes the formation of carbamoyl phosphate from the ammonia moiety of glutamine, carbonate, and phosphate donated by ATP, constituting the first step of 2 biosynthetic pathways, one leading to arginine and/or urea and the other to pyrimidine nucleotides. The large subunit (synthetase) binds the substrates ammonia (free or transferred from glutamine from the small subunit), hydrogencarbonate and ATP and carries out an ATP-coupled ligase reaction, activating hydrogencarbonate by forming carboxy phosphate which reacts with ammonia to form carbamoyl phosphate. This Aquifex aeolicus (strain VF5) protein is Carbamoyl phosphate synthase large chain, N-terminal section (carB1).